The following is a 100-amino-acid chain: Transcription and mRNA export factor SUS1 (100 aa).

This sequence belongs to the ENY2 family. Component of the nuclear pore complex (NPC)-associated TREX-2 complex (transcription and export complex 2), composed of at least SUS1, SAC3, THP1, SEM1, and CDC31. TREX-2 contains 2 SUS1 chains. The TREX-2 complex interacts with the nucleoporin NUP1. Component of the 1.8 MDa SAGA transcription coactivator-HAT complex. SAGA is built of 5 distinct domains with specialized functions. Within the SAGA complex, SUS1, SGF11, SGF73 and UBP8 form an additional subcomplex of SAGA called the DUB module (deubiquitination module). Interacts directly with THP1, SAC3, SGF11, and with the RNA polymerase II.

The protein localises to the nucleus. It localises to the nucleoplasm. Its subcellular location is the cytoplasm. The protein resides in the P-body. Involved in mRNA export coupled transcription activation by association with both the TREX-2 and the SAGA complexes. At the promoters, SAGA is required for recruitment of the basal transcription machinery. It influences RNA polymerase II transcriptional activity through different activities such as TBP interaction and promoter selectivity, interaction with transcription activators, and chromatin modification through histone acetylation and deubiquitination. Within the SAGA complex, participates in a subcomplex required for deubiquitination of H2B and for the maintenance of steady-state H3 methylation levels. The TREX-2 complex functions in docking export-competent ribonucleoprotein particles (mRNPs) to the nuclear entrance of the nuclear pore complex (nuclear basket). TREX-2 participates in mRNA export and accurate chromatin positioning in the nucleus by tethering genes to the nuclear periphery. May also be involved in cytoplasmic mRNA decay by interaction with components of P-bodies. This chain is Transcription and mRNA export factor SUS1, found in Cryptococcus neoformans var. neoformans serotype D (strain B-3501A) (Filobasidiella neoformans).